A 395-amino-acid polypeptide reads, in one-letter code: Major capsid protein P3 (395 aa).

In terms of assembly, homotrimer.

It localises to the virion. In terms of biological role, major capsid protein self-assembles to form an icosahedral capsid with a pseudo T=25 symmetry, about 66 nm in diameter, and consisting of 240 capsid proteins trimers. The capsid encapsulates an inner membrane and the genomic dsDNA genome. The major coat protein P3 and two assembly factors (P10 and P17) are needed during the assembly of the virus particle inside the host cell, when the capsid protein multimers are capable of enclosing the host-derived membrane, containing the virus-encoded membrane-associated proteins. This is Major capsid protein P3 (III) from Acinetobacter calcoaceticus (Arthrobacter siderocapsulatus).